The following is a 174-amino-acid chain: Large ribosomal subunit protein uL10 (174 aa).

The protein belongs to the universal ribosomal protein uL10 family. Part of the ribosomal stalk of the 50S ribosomal subunit. The N-terminus interacts with L11 and the large rRNA to form the base of the stalk. The C-terminus forms an elongated spine to which L12 dimers bind in a sequential fashion forming a multimeric L10(L12)X complex.

Forms part of the ribosomal stalk, playing a central role in the interaction of the ribosome with GTP-bound translation factors. The sequence is that of Large ribosomal subunit protein uL10 from Methylobacillus flagellatus (strain ATCC 51484 / DSM 6875 / VKM B-1610 / KT).